The following is a 227-amino-acid chain: Cytochrome c oxidase subunit 2 (227 aa).

Residues 1-14 (MAYPFQLGLQDATS) lie on the Mitochondrial intermembrane side of the membrane. A helical transmembrane segment spans residues 15 to 45 (PIMEELTNFHDHTLMIVFLISTLVLYIISLM). At 46 to 59 (LTTKLTHTSTMDAQ) the chain is on the mitochondrial matrix side. A helical transmembrane segment spans residues 60 to 87 (EVETIWTILPAVILILIALPSLRILYMM). The Mitochondrial intermembrane portion of the chain corresponds to 88–227 (DEINNPALTV…YFEDWSASMI (140 aa)). His161, Cys196, Glu198, Cys200, His204, and Met207 together coordinate Cu cation. Glu198 is a binding site for Mg(2+). At Tyr218 the chain carries Phosphotyrosine.

It belongs to the cytochrome c oxidase subunit 2 family. As to quaternary structure, component of the cytochrome c oxidase (complex IV, CIV), a multisubunit enzyme composed of 14 subunits. The complex is composed of a catalytic core of 3 subunits MT-CO1, MT-CO2 and MT-CO3, encoded in the mitochondrial DNA, and 11 supernumerary subunits COX4I, COX5A, COX5B, COX6A, COX6B, COX6C, COX7A, COX7B, COX7C, COX8 and NDUFA4, which are encoded in the nuclear genome. The complex exists as a monomer or a dimer and forms supercomplexes (SCs) in the inner mitochondrial membrane with NADH-ubiquinone oxidoreductase (complex I, CI) and ubiquinol-cytochrome c oxidoreductase (cytochrome b-c1 complex, complex III, CIII), resulting in different assemblies (supercomplex SCI(1)III(2)IV(1) and megacomplex MCI(2)III(2)IV(2)). Found in a complex with TMEM177, COA6, COX18, COX20, SCO1 and SCO2. Interacts with TMEM177 in a COX20-dependent manner. Interacts with COX20. Interacts with COX16. It depends on Cu cation as a cofactor.

Its subcellular location is the mitochondrion inner membrane. The catalysed reaction is 4 Fe(II)-[cytochrome c] + O2 + 8 H(+)(in) = 4 Fe(III)-[cytochrome c] + 2 H2O + 4 H(+)(out). Functionally, component of the cytochrome c oxidase, the last enzyme in the mitochondrial electron transport chain which drives oxidative phosphorylation. The respiratory chain contains 3 multisubunit complexes succinate dehydrogenase (complex II, CII), ubiquinol-cytochrome c oxidoreductase (cytochrome b-c1 complex, complex III, CIII) and cytochrome c oxidase (complex IV, CIV), that cooperate to transfer electrons derived from NADH and succinate to molecular oxygen, creating an electrochemical gradient over the inner membrane that drives transmembrane transport and the ATP synthase. Cytochrome c oxidase is the component of the respiratory chain that catalyzes the reduction of oxygen to water. Electrons originating from reduced cytochrome c in the intermembrane space (IMS) are transferred via the dinuclear copper A center (CU(A)) of subunit 2 and heme A of subunit 1 to the active site in subunit 1, a binuclear center (BNC) formed by heme A3 and copper B (CU(B)). The BNC reduces molecular oxygen to 2 water molecules using 4 electrons from cytochrome c in the IMS and 4 protons from the mitochondrial matrix. The polypeptide is Cytochrome c oxidase subunit 2 (MT-CO2) (Hybomys univittatus (Peter's striped mouse)).